We begin with the raw amino-acid sequence, 117 residues long: Urease subunit beta (117 aa).

A disordered region spans residues 95 to 117 (NAVNGKLDGGPHPGVPATERGAK).

It belongs to the urease beta subunit family. As to quaternary structure, heterotrimer of UreA (gamma), UreB (beta) and UreC (alpha) subunits. Three heterotrimers associate to form the active enzyme.

It localises to the cytoplasm. It catalyses the reaction urea + 2 H2O + H(+) = hydrogencarbonate + 2 NH4(+). Its pathway is nitrogen metabolism; urea degradation; CO(2) and NH(3) from urea (urease route): step 1/1. The polypeptide is Urease subunit beta (Pseudarthrobacter chlorophenolicus (strain ATCC 700700 / DSM 12829 / CIP 107037 / JCM 12360 / KCTC 9906 / NCIMB 13794 / A6) (Arthrobacter chlorophenolicus)).